A 132-amino-acid polypeptide reads, in one-letter code: UPF0212 protein PYRAB08340 (132 aa).

Belongs to the UPF0212 family.

The protein is UPF0212 protein PYRAB08340 of Pyrococcus abyssi (strain GE5 / Orsay).